The following is a 309-amino-acid chain: Transcription termination/antitermination protein NusG (309 aa).

Disordered stretches follow at residues 1-24 (MSDP…ADDE) and 58-91 (EGDH…VEAG). Residues 65 to 91 (TDEDIEAGAVETDEDVETDTDEDVEAG) show a composition bias toward acidic residues.

Belongs to the NusG family.

Functionally, participates in transcription elongation, termination and antitermination. This chain is Transcription termination/antitermination protein NusG, found in Streptomyces galbus.